We begin with the raw amino-acid sequence, 427 residues long: Glutamate-1-semialdehyde 2,1-aminomutase (427 aa).

Position 265 is an N6-(pyridoxal phosphate)lysine (Lys-265).

The protein belongs to the class-III pyridoxal-phosphate-dependent aminotransferase family. HemL subfamily. Homodimer. It depends on pyridoxal 5'-phosphate as a cofactor.

It localises to the cytoplasm. It carries out the reaction (S)-4-amino-5-oxopentanoate = 5-aminolevulinate. It participates in porphyrin-containing compound metabolism; protoporphyrin-IX biosynthesis; 5-aminolevulinate from L-glutamyl-tRNA(Glu): step 2/2. The protein is Glutamate-1-semialdehyde 2,1-aminomutase of Pasteurella multocida (strain Pm70).